We begin with the raw amino-acid sequence, 250 residues long: Triosephosphate isomerase (250 aa).

Substrate is bound at residue 9 to 11; it reads NWK. Residue His-95 is the Electrophile of the active site. Glu-167 acts as the Proton acceptor in catalysis. Substrate-binding positions include Gly-173, Ser-213, and 234–235; that span reads GG.

Belongs to the triosephosphate isomerase family. Homodimer.

It localises to the cytoplasm. The enzyme catalyses D-glyceraldehyde 3-phosphate = dihydroxyacetone phosphate. It functions in the pathway carbohydrate biosynthesis; gluconeogenesis. Its pathway is carbohydrate degradation; glycolysis; D-glyceraldehyde 3-phosphate from glycerone phosphate: step 1/1. Its function is as follows. Involved in the gluconeogenesis. Catalyzes stereospecifically the conversion of dihydroxyacetone phosphate (DHAP) to D-glyceraldehyde-3-phosphate (G3P). The chain is Triosephosphate isomerase from Herpetosiphon aurantiacus (strain ATCC 23779 / DSM 785 / 114-95).